We begin with the raw amino-acid sequence, 164 residues long: T-cell surface glycoprotein CD3 zeta chain (164 aa).

The first 21 residues, 1 to 21, serve as a signal peptide directing secretion; the sequence is MKWKVSVLACILHVRFPGAEA. The residue at position 22 (Gln-22) is a Blocked amino end (Gln). Residues 22–30 lie on the Extracellular side of the membrane; that stretch reads QSFGLLDPK. Residues 31-51 form a helical membrane-spanning segment; sequence LCYLLDGILFIYGVIITALYL. Over 52-164 the chain is Cytoplasmic; it reads RAKFSRSAET…ALHMQTLAPR (113 aa). Ser-58 is modified (phosphoserine). 3 ITAM domains span residues 61 to 89, 100 to 128, and 131 to 159; these read TAAN…LEKK, QQRR…EIGT, and ERRR…LHMQ. A phosphotyrosine mark is found at Tyr-72 and Tyr-83. Residues 87-96 show a composition bias toward basic and acidic residues; the sequence is EKKRARDPEM. The tract at residues 87–111 is disordered; sequence EKKRARDPEMGGKQQRRRNPQEGVY. Phosphotyrosine is present on residues Tyr-111, Tyr-123, Tyr-142, and Tyr-153. The disordered stretch occupies residues 124–143; the sequence is SEIGTKGERRRGKGHDGLYQ.

This sequence belongs to the CD3Z/FCER1G family. In terms of assembly, the TCR-CD3 complex is composed of a CD3D/CD3E and a CD3G/CD3E heterodimers that preferentially associate with TCRalpha and TCRbeta, respectively, to form TCRalpha/CD3E/CD3G and TCRbeta/CD3G/CD3E trimers. In turn, the hexamer interacts with CD3Z homodimer to form the TCR-CD3 complex. Alternatively, TCRalpha and TCRbeta can be replaced by TCRgamma and TCRdelta. Interacts with SLA. Interacts with SLA2. Interacts with TRAT1. Interacts with DOCK2. Interacts with SHB. Interacts with ZAP70. Interacts (tyrosine phosphorylated) with SHC1 (via SH2 domain). Interacts with PTPRC. Interacts with CRK; this interaction regulates CD3Z phosphorylation. Interacts (on T cell side) with CD81, ICAM1 and CD9 at immunological synapses between antigen-presenting cells and T cells. Interacts with CD160. Interacts with LY6E. Interacts with LY6E. The signaling subunit of immunoglobulin gamma (IgG) Fc receptor complex. As a homodimer or a heterodimer with FCER1G, associates with the ligand binding subunit FCGR3A (via transmembrane domain); this interaction is a prerequisite for Fc receptor complex expression on the cell surface. Interacts with CD5. Post-translationally, phosphorylated on Tyr residues after T-cell receptor triggering by LCK in association with CD4/CD8. In terms of tissue distribution, CD3Z is expressed in normal lymphoid tissue and in peripheral blood mononuclear cells (PBMCs). Expressed also in retinal ganglion cells.

The protein localises to the cell membrane. Its function is as follows. Part of the TCR-CD3 complex present on T-lymphocyte cell surface that plays an essential role in adaptive immune response. When antigen presenting cells (APCs) activate T-cell receptor (TCR), TCR-mediated signals are transmitted across the cell membrane by the CD3 chains CD3D, CD3E, CD3G and CD3Z. All CD3 chains contain immunoreceptor tyrosine-based activation motifs (ITAMs) in their cytoplasmic domain. Upon TCR engagement, these motifs become phosphorylated by Src family protein tyrosine kinases LCK and FYN, resulting in the activation of downstream signaling pathways. CD3Z ITAMs phosphorylation creates multiple docking sites for the protein kinase ZAP70 leading to ZAP70 phosphorylation and its conversion into a catalytically active enzyme. Plays an important role in intrathymic T-cell differentiation. Additionally, participates in the activity-dependent synapse formation of retinal ganglion cells (RGCs) in both the retina and dorsal lateral geniculate nucleus (dLGN). This Mus musculus (Mouse) protein is T-cell surface glycoprotein CD3 zeta chain (Cd247).